Consider the following 85-residue polypeptide: Acyl carrier protein (85 aa).

Residues 2–78 (SQISERVIDL…DAIAYIESHA (77 aa)) enclose the Carrier domain. Serine 37 bears the O-(pantetheine 4'-phosphoryl)serine mark.

It belongs to the acyl carrier protein (ACP) family. In terms of processing, 4'-phosphopantetheine is transferred from CoA to a specific serine of apo-ACP by AcpS. This modification is essential for activity because fatty acids are bound in thioester linkage to the sulfhydryl of the prosthetic group.

The protein resides in the cytoplasm. Its pathway is lipid metabolism; fatty acid biosynthesis. In terms of biological role, carrier of the growing fatty acid chain in fatty acid biosynthesis. The protein is Acyl carrier protein of Azobacteroides pseudotrichonymphae genomovar. CFP2.